A 436-amino-acid chain; its full sequence is APO protein 1, chloroplastic (436 aa).

Residues 1 to 47 (MLLVSPACRGVYLQTIDPKPIDFSARASYALCFQIPTSIPKRECLMR) constitute a chloroplast transit peptide. 2 consecutive APO domains span residues 155–240 (ACSE…EIPE) and 329–414 (ACGY…RVPQ).

Belongs to the APO family. Expressed at low level. Expressed at higher level in leaves. Expressed at lower level in roots, stems, siliques and flowers.

It is found in the plastid. Its subcellular location is the chloroplast. Functionally, involved in the stable assembly of several 4Fe-4S cluster-containing complexes of chloroplasts. May participate in 4Fe-4S cofactor incorporation into psaA and/or psaB during translation. This chain is APO protein 1, chloroplastic (APO1), found in Arabidopsis thaliana (Mouse-ear cress).